Consider the following 968-residue polypeptide: RNA polymerase-associated protein RapA (968 aa).

A Helicase ATP-binding domain is found at 164–334; the sequence is DVGRRHAPRV…FARLRLLDPN (171 aa). 177-184 serves as a coordination point for ATP; the sequence is DEVGLGKT. Positions 280–283 match the DEAH box motif; sequence DEAH. Residues 490–685 enclose the Helicase C-terminal domain; sequence RVEWLMGYLT…ALKAQLEQGR (196 aa).

The protein belongs to the SNF2/RAD54 helicase family. RapA subfamily. As to quaternary structure, interacts with the RNAP. Has a higher affinity for the core RNAP than for the holoenzyme. Its ATPase activity is stimulated by binding to RNAP.

In terms of biological role, transcription regulator that activates transcription by stimulating RNA polymerase (RNAP) recycling in case of stress conditions such as supercoiled DNA or high salt concentrations. Probably acts by releasing the RNAP, when it is trapped or immobilized on tightly supercoiled DNA. Does not activate transcription on linear DNA. Probably not involved in DNA repair. In Salmonella paratyphi A (strain ATCC 9150 / SARB42), this protein is RNA polymerase-associated protein RapA.